Reading from the N-terminus, the 407-residue chain is Digeranylgeranylglycerophospholipid reductase (407 aa).

Alanine 15, glutamate 34, cysteine 45, alanine 46, glycine 48, arginine 99, alanine 123, aspartate 281, glycine 293, and isoleucine 294 together coordinate FAD.

Belongs to the geranylgeranyl reductase family. DGGGPL reductase subfamily. Requires FAD as cofactor.

The enzyme catalyses a 2,3-bis-O-phytanyl-sn-glycerol 1-phospholipid + 8 oxidized 2[4Fe-4S]-[ferredoxin] = a 2,3-bis-O-(geranylgeranyl)-sn-glycerol 1-phospholipid + 8 reduced 2[4Fe-4S]-[ferredoxin] + 16 H(+). It carries out the reaction 2,3-bis-O-(phytanyl)-sn-glycerol 1-phosphate + 8 oxidized 2[4Fe-4S]-[ferredoxin] = 2,3-bis-O-(geranylgeranyl)-sn-glycerol 1-phosphate + 8 reduced 2[4Fe-4S]-[ferredoxin] + 16 H(+). The catalysed reaction is a 2,3-bis-O-phytanyl-sn-glycerol 1-phospholipid + 8 A = a 2,3-bis-O-(geranylgeranyl)-sn-glycerol 1-phospholipid + 8 AH2. It catalyses the reaction CDP-2,3-bis-O-(geranylgeranyl)-sn-glycerol + 8 AH2 = CDP-2,3-bis-O-(phytanyl)-sn-glycerol + 8 A. The enzyme catalyses archaetidylserine + 8 AH2 = 2,3-bis-O-phytanyl-sn-glycero-3-phospho-L-serine + 8 A. The protein operates within membrane lipid metabolism; glycerophospholipid metabolism. In terms of biological role, is involved in the reduction of 2,3-digeranylgeranylglycerophospholipids (unsaturated archaeols) into 2,3-diphytanylglycerophospholipids (saturated archaeols) in the biosynthesis of archaeal membrane lipids. Catalyzes the formation of archaetidic acid (2,3-di-O-phytanyl-sn-glyceryl phosphate) from 2,3-di-O-geranylgeranylglyceryl phosphate (DGGGP) via the hydrogenation of each double bond of the isoprenoid chains. Is also probably able to reduce double bonds of geranyl groups in CDP-2,3-bis-O-(geranylgeranyl)-sn-glycerol and archaetidylserine, thus acting at various stages in the biosynthesis of archaeal membrane lipids. The sequence is that of Digeranylgeranylglycerophospholipid reductase from Methanosarcina mazei (strain ATCC BAA-159 / DSM 3647 / Goe1 / Go1 / JCM 11833 / OCM 88) (Methanosarcina frisia).